Here is a 116-residue protein sequence, read N- to C-terminus: Protein Rev (116 aa).

At Ser8 the chain carries Phosphoserine; by host CK2. Residues 18 to 26 (LIKSLYQSN) form a homomultimerization region. 2 disordered regions span residues 20 to 46 (KSLYQSNPPPSPEGTRQARRNRRRRWR) and 84 to 116 (DSSEDCGTSGTQGVGSPQVLVESPAVLESGAKE). A Nuclear localization signal and RNA-binding (RRE) motif is present at residues 34-50 (TRQARRNRRRRWRERQR). Basic residues predominate over residues 36–46 (QARRNRRRRWR). The Nuclear export signal and binding to XPO1 signature appears at 73–84 (LQLPPLERLTLD). The span at 88–98 (DCGTSGTQGVG) shows a compositional bias: polar residues. 2 positions are modified to phosphoserine; by host: Ser92 and Ser99.

Belongs to the HIV-1 REV protein family. Homomultimer; when bound to the RRE. Multimeric assembly is essential for activity and may involve XPO1. Binds to human KPNB1, XPO1, TNPO1, RANBP5 and IPO7. Interacts with the viral Integrase. Interacts with human KHDRBS1. Interacts with human NAP1; this interaction decreases Rev multimerization and stimulates its activity. Interacts with human DEAD-box helicases DDX3 and DDX24; these interactions may serve for viral RNA export to the cytoplasm and packaging, respectively. Interacts with human PSIP1; this interaction may inhibit HIV-1 DNA integration by promoting dissociation of the Integrase-LEDGF/p75 complex. Post-translationally, asymmetrically arginine dimethylated at one site by host PRMT6. Methylation impairs the RNA-binding activity and export of viral RNA from the nucleus to the cytoplasm. Phosphorylated by protein kinase CK2. Presence of, and maybe binding to the N-terminus of the regulatory beta subunit of CK2 is necessary for CK2-mediated Rev's phosphorylation.

The protein localises to the host nucleus. It is found in the host nucleolus. It localises to the host cytoplasm. Escorts unspliced or incompletely spliced viral pre-mRNAs (late transcripts) out of the nucleus of infected cells. These pre-mRNAs carry a recognition sequence called Rev responsive element (RRE) located in the env gene, that is not present in fully spliced viral mRNAs (early transcripts). This function is essential since most viral proteins are translated from unspliced or partially spliced pre-mRNAs which cannot exit the nucleus by the pathway used by fully processed cellular mRNAs. Rev itself is translated from a fully spliced mRNA that readily exits the nucleus. Rev's nuclear localization signal (NLS) binds directly to KPNB1/Importin beta-1 without previous binding to KPNA1/Importin alpha-1. KPNB1 binds to the GDP bound form of RAN (Ran-GDP) and targets Rev to the nucleus. In the nucleus, the conversion from Ran-GDP to Ran-GTP dissociates Rev from KPNB1 and allows Rev's binding to the RRE in viral pre-mRNAs. Rev multimerization on the RRE via cooperative assembly exposes its nuclear export signal (NES) to the surface. Rev can then form a complex with XPO1/CRM1 and Ran-GTP, leading to nuclear export of the complex. Conversion from Ran-GTP to Ran-GDP mediates dissociation of the Rev/RRE/XPO1/RAN complex, so that Rev can return to the nucleus for a subsequent round of export. Beside KPNB1, also seems to interact with TNPO1/Transportin-1, RANBP5/IPO5 and IPO7/RANBP7 for nuclear import. The nucleoporin-like HRB/RIP is an essential cofactor that probably indirectly interacts with Rev to release HIV RNAs from the perinuclear region to the cytoplasm. The polypeptide is Protein Rev (Human immunodeficiency virus type 1 group M subtype B (isolate RF/HAT3) (HIV-1)).